A 293-amino-acid polypeptide reads, in one-letter code: tRNA pseudouridine synthase A (293 aa).

D67 (nucleophile) is an active-site residue. Y125 provides a ligand contact to substrate.

Belongs to the tRNA pseudouridine synthase TruA family. As to quaternary structure, homodimer.

The enzyme catalyses uridine(38/39/40) in tRNA = pseudouridine(38/39/40) in tRNA. In terms of biological role, formation of pseudouridine at positions 38, 39 and 40 in the anticodon stem and loop of transfer RNAs. The protein is tRNA pseudouridine synthase A of Synechococcus sp. (strain CC9605).